Reading from the N-terminus, the 101-residue chain is Citrate lyase acyl carrier protein (101 aa).

Ser14 carries the O-(phosphoribosyl dephospho-coenzyme A)serine modification.

It belongs to the CitD family. Oligomer with a subunit composition of (alpha,beta,gamma)6.

Its subcellular location is the cytoplasm. In terms of biological role, covalent carrier of the coenzyme of citrate lyase. This is Citrate lyase acyl carrier protein from Lacticaseibacillus casei (strain BL23) (Lactobacillus casei).